We begin with the raw amino-acid sequence, 607 residues long: DNA mismatch repair protein MutL (607 aa).

Belongs to the DNA mismatch repair MutL/HexB family.

This protein is involved in the repair of mismatches in DNA. It is required for dam-dependent methyl-directed DNA mismatch repair. May act as a 'molecular matchmaker', a protein that promotes the formation of a stable complex between two or more DNA-binding proteins in an ATP-dependent manner without itself being part of a final effector complex. In Gemmatimonas aurantiaca (strain DSM 14586 / JCM 11422 / NBRC 100505 / T-27), this protein is DNA mismatch repair protein MutL.